The chain runs to 78 residues: Large ribosomal subunit protein bL28 (78 aa).

It belongs to the bacterial ribosomal protein bL28 family.

The chain is Large ribosomal subunit protein bL28 from Prochlorococcus marinus (strain MIT 9312).